The primary structure comprises 359 residues: MSTDPVQVLQPDGFNKSRWTQLPRDVLIGHQAIMQLPDIIADIKPGRSVLLISGGTTREVAGNTVADILKDQYEVRRFVAGKLDADTLEACSQASSSADFLIGVGGGRVIDCAKIVSYKQGKPFISVPTAASHDGIISGRATLPTETGSVSVGAHPPIAVVADTGIISQAPHRLMASGCADVISNYTAILDWELAHRLRGEQISEYAIALSKMTAEILVKDANLIKPGQEEAAWIVVKALVSSGVSMAIAGSSRPASGGEHKFGHALERLMPGAALHGEACGIGSIMTMYLHGGDWREIRSSLARIGAPTTPRELNIPDEVIVEALMKARDIRPERFTILDMGLTRESAEHLVQMLYEE.

NAD(+)-binding positions include 107–111 (GRVID) and 129–132 (TAAS). Aspartate 134 serves as a coordination point for substrate. Position 138 (serine 138) interacts with NAD(+). Aspartate 181 serves as a coordination point for substrate. Zn(2+) contacts are provided by aspartate 181 and histidine 261. Residue histidine 265 coordinates substrate. Residue histidine 277 participates in Zn(2+) binding.

This sequence belongs to the glycerol-1-phosphate dehydrogenase family. Zn(2+) serves as cofactor.

It localises to the cytoplasm. The catalysed reaction is sn-glycerol 1-phosphate + NAD(+) = dihydroxyacetone phosphate + NADH + H(+). It carries out the reaction sn-glycerol 1-phosphate + NADP(+) = dihydroxyacetone phosphate + NADPH + H(+). Its pathway is membrane lipid metabolism; glycerophospholipid metabolism. Functionally, catalyzes the NAD(P)H-dependent reduction of dihydroxyacetonephosphate (DHAP or glycerone phosphate) to glycerol 1-phosphate (G1P). The G1P thus generated is used as the glycerophosphate backbone of phospholipids in the cellular membranes of Archaea. In Methanospirillum hungatei JF-1 (strain ATCC 27890 / DSM 864 / NBRC 100397 / JF-1), this protein is Glycerol-1-phosphate dehydrogenase [NAD(P)+].